The primary structure comprises 275 residues: Putative carbamate hydrolase RutD (275 aa).

One can recognise an AB hydrolase-1 domain in the interval 15 to 116 (TVVLSSGLGG…SLVVINGWTV (102 aa)).

Belongs to the AB hydrolase superfamily. Hydrolase RutD family.

The enzyme catalyses carbamate + 2 H(+) = NH4(+) + CO2. Functionally, involved in pyrimidine catabolism. May facilitate the hydrolysis of carbamate, a reaction that can also occur spontaneously. The protein is Putative carbamate hydrolase RutD of Pantoea ananatis (strain LMG 20103).